Reading from the N-terminus, the 479-residue chain is Aspartyl/glutamyl-tRNA(Asn/Gln) amidotransferase subunit B (479 aa).

Belongs to the GatB/GatE family. GatB subfamily. As to quaternary structure, heterotrimer of A, B and C subunits.

It carries out the reaction L-glutamyl-tRNA(Gln) + L-glutamine + ATP + H2O = L-glutaminyl-tRNA(Gln) + L-glutamate + ADP + phosphate + H(+). The catalysed reaction is L-aspartyl-tRNA(Asn) + L-glutamine + ATP + H2O = L-asparaginyl-tRNA(Asn) + L-glutamate + ADP + phosphate + 2 H(+). Functionally, allows the formation of correctly charged Asn-tRNA(Asn) or Gln-tRNA(Gln) through the transamidation of misacylated Asp-tRNA(Asn) or Glu-tRNA(Gln) in organisms which lack either or both of asparaginyl-tRNA or glutaminyl-tRNA synthetases. The reaction takes place in the presence of glutamine and ATP through an activated phospho-Asp-tRNA(Asn) or phospho-Glu-tRNA(Gln). The sequence is that of Aspartyl/glutamyl-tRNA(Asn/Gln) amidotransferase subunit B from Streptococcus pyogenes serotype M28 (strain MGAS6180).